Consider the following 391-residue polypeptide: Leucine-rich repeat-containing protein 74B (391 aa).

The segment at 1–38 (MKGPCEVQKNEDQEGEAAATGPQAETLEAERSWTADSH) is disordered. Basic and acidic residues predominate over residues 28-38 (EAERSWTADSH). LRR repeat units lie at residues 106–126 (YIKR…EALA), 134–154 (IISD…QAIC), 162–182 (TVEK…QHLA), 190–211 (GLKS…ILGP), 218–239 (GLTE…AFAR), 246–259 (FLKV…GFGD), 274–294 (VLEE…LKLG), 302–323 (TLRI…GLLK), and 332–354 (ALEL…ASSM). The interval 371–391 (KDWPQASTPSQPASAPSDSGL) is disordered. Positions 374–391 (PQASTPSQPASAPSDSGL) are enriched in low complexity.

This is Leucine-rich repeat-containing protein 74B from Mus musculus (Mouse).